Reading from the N-terminus, the 436-residue chain is Adenylosuccinate synthetase (436 aa).

GTP is bound by residues 12–18 (GDEGKGK) and 40–42 (GHT). Asp13 acts as the Proton acceptor in catalysis. Mg(2+) contacts are provided by Asp13 and Gly40. IMP-binding positions include 13 to 16 (DEGK), 38 to 41 (NAGH), Thr128, Arg142, Gln223, Thr238, and Arg302. His41 functions as the Proton donor in the catalytic mechanism. Position 298-304 (298-304 (TTTGRRR)) interacts with substrate. Residues Arg304, 330-332 (KLD), and 412-414 (SLG) each bind GTP.

It belongs to the adenylosuccinate synthetase family. In terms of assembly, homodimer. Mg(2+) serves as cofactor.

It localises to the cytoplasm. It catalyses the reaction IMP + L-aspartate + GTP = N(6)-(1,2-dicarboxyethyl)-AMP + GDP + phosphate + 2 H(+). It participates in purine metabolism; AMP biosynthesis via de novo pathway; AMP from IMP: step 1/2. In terms of biological role, plays an important role in the de novo pathway of purine nucleotide biosynthesis. Catalyzes the first committed step in the biosynthesis of AMP from IMP. This is Adenylosuccinate synthetase from Prochlorococcus marinus (strain MIT 9312).